The primary structure comprises 273 residues: Exosporium protein C (273 aa).

Its subcellular location is the spore wall. This Clostridium sporogenes (strain ATCC 15579) protein is Exosporium protein C.